Reading from the N-terminus, the 340-residue chain is MEF2 transcription factor homolog (340 aa).

An MADS-box domain is found at 1–61 (MGRKKIQITR…NKLFQYASTD (61 aa)). Disordered regions lie at residues 90-112 (RKEG…TSPV), 193-217 (NQRN…LDFP), 258-283 (LQQR…NGTS), and 312-340 (PNTY…QQLT). Residues 200-211 (SSTSVAPSSSSS) are compositionally biased toward low complexity. Residues 258–268 (LQQRPVSQPAP) are compositionally biased toward polar residues. The span at 269–283 (SISNSSTNGISNGTS) shows a compositional bias: low complexity. The segment covering 318-332 (MEPHSPPEKRPRITT) has biased composition (basic and acidic residues).

The protein belongs to the MEF2 family. Interacts with histone deacetylase hda-4 isoform b.

The protein localises to the nucleus. Functionally, transcription regulator. Binds specifically to the MEF2 element, 5'-[TC]TA[AT][AT][AT][AT]TA[AG]-3' in the regulatory elements of target genes, such as chemoreceptors str-1 and srh-234. Involved in transduction of sensory signals, together with egl-4, kin-29 and hda-4; binding to histone deacetylase hda-4 enables negative modulation of chemoreceptor gene expression in chemosensory neurons. In response to starvation, negatively modulates expression of chemoreceptor srh-234 in ADL sensory neurons, acting in concert with basic helix-loop-helix (bHLH) transcription factors. Plays a role in regulating muscle sensitivity to acetylcholine (ACh) and the magnitude of presynaptic ACh release via a retrograde signal, perhaps by indirectly decreasing Ras-related protein Rab-3 activity. This is MEF2 transcription factor homolog from Caenorhabditis elegans.